The primary structure comprises 116 residues: Large ribosomal subunit protein uL22 (116 aa).

Belongs to the universal ribosomal protein uL22 family. In terms of assembly, part of the 50S ribosomal subunit.

This protein binds specifically to 23S rRNA; its binding is stimulated by other ribosomal proteins, e.g. L4, L17, and L20. It is important during the early stages of 50S assembly. It makes multiple contacts with different domains of the 23S rRNA in the assembled 50S subunit and ribosome. Functionally, the globular domain of the protein is located near the polypeptide exit tunnel on the outside of the subunit, while an extended beta-hairpin is found that lines the wall of the exit tunnel in the center of the 70S ribosome. The protein is Large ribosomal subunit protein uL22 of Sulfurihydrogenibium sp. (strain YO3AOP1).